The chain runs to 153 residues: SsrA-binding protein (153 aa).

Belongs to the SmpB family.

Its subcellular location is the cytoplasm. Its function is as follows. Required for rescue of stalled ribosomes mediated by trans-translation. Binds to transfer-messenger RNA (tmRNA), required for stable association of tmRNA with ribosomes. tmRNA and SmpB together mimic tRNA shape, replacing the anticodon stem-loop with SmpB. tmRNA is encoded by the ssrA gene; the 2 termini fold to resemble tRNA(Ala) and it encodes a 'tag peptide', a short internal open reading frame. During trans-translation Ala-aminoacylated tmRNA acts like a tRNA, entering the A-site of stalled ribosomes, displacing the stalled mRNA. The ribosome then switches to translate the ORF on the tmRNA; the nascent peptide is terminated with the 'tag peptide' encoded by the tmRNA and targeted for degradation. The ribosome is freed to recommence translation, which seems to be the essential function of trans-translation. This chain is SsrA-binding protein, found in Paramagnetospirillum magneticum (strain ATCC 700264 / AMB-1) (Magnetospirillum magneticum).